The chain runs to 563 residues: Coiled-coil domain-containing protein 38 (563 aa).

Positions Thr-128–Glu-211 form a coiled coil. The interval Asp-265–Ser-310 is disordered. Basic and acidic residues predominate over residues Asp-269–Ser-281. 2 coiled-coil regions span residues Gln-361–Leu-415 and Asn-454–Gln-522. Residues Gln-543–Ser-563 form a disordered region.

In terms of assembly, interacts with CCDC42, CFAP53, IFT88 and ODF2. Interacts with CCDC146. Interacts with TEKT3. Interacts with ubiquitinated histone H2A. As to expression, expressed exclusively in testis where it is detected mainly in spermatogonia and spermatocytes (at protein level).

It localises to the cytoplasm. The protein localises to the cytoskeleton. Its subcellular location is the microtubule organizing center. The protein resides in the centrosome. It is found in the perinuclear region. It localises to the cell projection. The protein localises to the cilium. Its subcellular location is the flagellum. In terms of biological role, essential for male fertility. Required for sperm flagellum biogenesis. Also required for acrosome biogenesis. Required for the attachment of developing acrosomes to the nucleus during spermiogenesis and may be involved in the transport of fibrous sheath components. This Mus musculus (Mouse) protein is Coiled-coil domain-containing protein 38 (Ccdc38).